The primary structure comprises 247 residues: MAGHSKWANIKFRKGVQDAKRGKIFTKLIREITVAARMGGGDESSNPRLRDAVKKALNANMKRDTIDNAVKRGVGGADGEAMIAMRYEGYGPGGVAILVDCLSDNKNRTVSEVRHAFSKHGGNLGTDGSVSYLFTNQGEILMASNQPEDKVMEIAIDAGASDVAVEDSQVEIITPVEAYHTVLNALQDAGLEVEQSHLTMRAQTLVPISDETAESLIKLIDMLEDLDDVQEVYSNAEFSEKILESMN.

It belongs to the TACO1 family.

It localises to the cytoplasm. This Legionella pneumophila (strain Corby) protein is Probable transcriptional regulatory protein LPC_0711.